Reading from the N-terminus, the 336-residue chain is tRNA (guanine(10)-N2)-dimethyltransferase (336 aa).

Residues 50-147 (KILKKRLAYA…NDRFILTRRL (98 aa)) form the THUMP domain.

The protein belongs to the methyltransferase superfamily. Trm-G10 family. As to quaternary structure, monomer.

The protein resides in the cytoplasm. It carries out the reaction guanosine(10) in tRNA + 2 S-adenosyl-L-methionine = N(2)-dimethylguanosine(10) in tRNA + 2 S-adenosyl-L-homocysteine + 2 H(+). Its function is as follows. Catalyzes the adenosylmethionine-dependent methylation of the exocyclic amino group (N(2)) of guanosine at position 10 of various tRNAs. Acts via a two-step process that leads to the formation of either N(2)-monomethyl (m(2)G) or N(2)-dimethylguanosine (m(2)(2)G). This Methanothermobacter thermautotrophicus (strain ATCC 29096 / DSM 1053 / JCM 10044 / NBRC 100330 / Delta H) (Methanobacterium thermoautotrophicum) protein is tRNA (guanine(10)-N2)-dimethyltransferase (trmG10).